The primary structure comprises 325 residues: Serine/threonine-protein kinase CtkA (325 aa).

ATP-binding positions include Asn-21 to Lys-24, Lys-37, Gln-72, and Lys-88 to Phe-90. 2 residues coordinate Mg(2+): Asn-160 and Asp-179. Asp-179 contributes to the ATP binding site. Positions Gln-296 to Arg-325 are disordered.

In terms of processing, autophosphorylates on either Thr-3 or Thr-7.

It is found in the secreted. Its subcellular location is the host cytoplasm. It localises to the host cytosol. The protein resides in the host nucleus. The enzyme catalyses L-seryl-[protein] + ATP = O-phospho-L-seryl-[protein] + ADP + H(+). It carries out the reaction L-threonyl-[protein] + ATP = O-phospho-L-threonyl-[protein] + ADP + H(+). In terms of biological role, virulence factor acting as a pro-inflammatory protein that induces the secretion of the pro-inflammatory cytokines TNF-alpha (tumor necrosis factor-alpha) and IL-8 (interleukin-8) from human macrophages, as well as enhanced translocation of the transcription factor NF-kappa-B complex in macrophages. Is a kinase capable of autophosphorylating itself at a threonine residue near the N-terminus. Also leads to enhanced phosphorylation of the NF-kappa-B p65 subunit (RELA) at 'Ser-276' in human epithelial cancer cells; its kinase activity is required for this enhanced phosphorylation that up-regulates NF-kappa-B activity, but it does not directly phosphorylate this protein. Thus, the kinase activity of CtkA may play an important role in the induction of host inflammatory responses during H.pylori infection. The polypeptide is Serine/threonine-protein kinase CtkA (ctkA) (Helicobacter pylori (strain J99 / ATCC 700824) (Campylobacter pylori J99)).